A 315-amino-acid polypeptide reads, in one-letter code: tRNA-dihydrouridine(16) synthase (315 aa).

FMN is bound by residues 7–9 (PME) and Q68. C98 serves as the catalytic Proton donor. FMN is bound by residues K139, 199–201 (NGE), and 223–224 (GR).

Belongs to the Dus family. DusC subfamily. The cofactor is FMN.

It catalyses the reaction 5,6-dihydrouridine(16) in tRNA + NADP(+) = uridine(16) in tRNA + NADPH + H(+). The enzyme catalyses 5,6-dihydrouridine(16) in tRNA + NAD(+) = uridine(16) in tRNA + NADH + H(+). Its function is as follows. Catalyzes the synthesis of 5,6-dihydrouridine (D), a modified base found in the D-loop of most tRNAs, via the reduction of the C5-C6 double bond in target uridines. Specifically modifies U16 in tRNAs. The sequence is that of tRNA-dihydrouridine(16) synthase from Shewanella oneidensis (strain ATCC 700550 / JCM 31522 / CIP 106686 / LMG 19005 / NCIMB 14063 / MR-1).